Consider the following 329-residue polypeptide: Vitamin B12 import system permease protein BtuC (329 aa).

The next 9 helical transmembrane spans lie at 22–42 (LSVL…QWIA), 64–84 (LAVL…QALF), 91–111 (PGLL…VLLG), 115–135 (LPGW…TLIL), 149–169 (LLAG…AIYF), 187–207 (GGVD…SLWI), 243–263 (GWMV…GLVI), 277–297 (ALLP…DVIA), and 305–325 (ELPI…WLLL).

The protein belongs to the binding-protein-dependent transport system permease family. FecCD subfamily. As to quaternary structure, the complex is composed of two ATP-binding proteins (BtuD), two transmembrane proteins (BtuC) and a solute-binding protein (BtuF).

The protein resides in the cell inner membrane. Part of the ABC transporter complex BtuCDF involved in vitamin B12 import. Involved in the translocation of the substrate across the membrane. The sequence is that of Vitamin B12 import system permease protein BtuC from Citrobacter koseri (strain ATCC BAA-895 / CDC 4225-83 / SGSC4696).